Consider the following 947-residue polypeptide: Protein translocase subunit SecA (947 aa).

ATP contacts are provided by residues glutamine 87, 105–109 (GEGKT), and aspartate 525. A disordered region spans residues 905–928 (PADNADKTARNPNDPSTWGKVGRN). Residues cysteine 931, cysteine 933, cysteine 942, and histidine 943 each contribute to the Zn(2+) site.

Belongs to the SecA family. As to quaternary structure, monomer and homodimer. Part of the essential Sec protein translocation apparatus which comprises SecA, SecYEG and auxiliary proteins SecDF-YajC and YidC. The cofactor is Zn(2+).

Its subcellular location is the cell inner membrane. It localises to the cytoplasm. The enzyme catalyses ATP + H2O + cellular proteinSide 1 = ADP + phosphate + cellular proteinSide 2.. Functionally, part of the Sec protein translocase complex. Interacts with the SecYEG preprotein conducting channel. Has a central role in coupling the hydrolysis of ATP to the transfer of proteins into and across the cell membrane, serving both as a receptor for the preprotein-SecB complex and as an ATP-driven molecular motor driving the stepwise translocation of polypeptide chains across the membrane. The polypeptide is Protein translocase subunit SecA (Rhodopseudomonas palustris (strain BisB18)).